The chain runs to 248 residues: DNA repair protein RecO (248 aa).

Belongs to the RecO family.

Involved in DNA repair and RecF pathway recombination. The protein is DNA repair protein RecO of Bradyrhizobium sp. (strain BTAi1 / ATCC BAA-1182).